The sequence spans 420 residues: Bile acid-CoA:amino acid N-acyltransferase (420 aa).

At K40 the chain carries N6-succinyllysine. S125 is modified (phosphoserine). Active-site charge relay system residues include C235 and D328. K346 and K350 each carry N6-succinyllysine. The Charge relay system role is filled by H362. K409 bears the N6-succinyllysine mark. S418 bears the Phosphoserine mark.

The protein belongs to the C/M/P thioester hydrolase family. In terms of assembly, monomer. As to expression, highly expressed in liver, kidney, gallbladder, proximal intestine and distal intestine. Weakly expressed in adrenal gland, lung, brain and muscle.

Its subcellular location is the cytoplasm. The protein resides in the cytosol. It is found in the peroxisome. The catalysed reaction is choloyl-CoA + glycine = glycocholate + CoA + H(+). The enzyme catalyses hexadecanoyl-CoA + H2O = hexadecanoate + CoA + H(+). It carries out the reaction choloyl-CoA + H2O = cholate + CoA + H(+). It catalyses the reaction chenodeoxycholoyl-CoA + H2O = chenodeoxycholate + CoA + H(+). The catalysed reaction is eicosanoyl-CoA + H2O = eicosanoate + CoA + H(+). The enzyme catalyses octadecanoyl-CoA + H2O = octadecanoate + CoA + H(+). It carries out the reaction docosanoyl-CoA + H2O = docosanoate + CoA + H(+). It catalyses the reaction tetracosanoyl-CoA + H2O = tetracosanoate + CoA + H(+). The catalysed reaction is hexacosanoyl-CoA + H2O = hexacosanoate + CoA + H(+). The enzyme catalyses dodecanoyl-CoA + H2O = dodecanoate + CoA + H(+). It carries out the reaction tetradecanoyl-CoA + H2O = tetradecanoate + CoA + H(+). It catalyses the reaction choloyl-CoA + taurine = taurocholate + CoA + H(+). The catalysed reaction is chenodeoxycholoyl-CoA + glycine = glycochenodeoxycholate + CoA + H(+). The enzyme catalyses chenodeoxycholoyl-CoA + taurine = taurochenodeoxycholate + CoA + H(+). It carries out the reaction eicosanoyl-CoA + glycine = N-eicosanoylglycinate + CoA + H(+). It catalyses the reaction hexacosanoyl-CoA + glycine = N-hexacosanoylglycine + CoA + H(+). The catalysed reaction is docosanoyl-CoA + glycine = N-docosanoylglycine + CoA + H(+). Its function is as follows. Catalyzes the amidation of bile acids (BAs) with the amino acid taurine. Selective for taurine conjugation of cholyl CoA and only taurine-conjugated BAs are found in bile. Amidation of BAs in the liver with taurine prior to their excretion into bile is an important biochemical event in bile acid metabolism. This conjugation (or amidation) plays several important biological roles in that it promotes the secretion of BAs and cholesterol into bile and increases the detergent properties of BAs in the intestine, which facilitates lipid and vitamin absorption. May also act as an acyl-CoA thioesterase that regulates intracellular levels of free fatty acids. In vitro, catalyzes the hydrolysis of long- and very long-chain saturated acyl-CoAs to the free fatty acid and coenzyme A (CoASH), and conjugates glycine to these acyl-CoAs. In Mus musculus (Mouse), this protein is Bile acid-CoA:amino acid N-acyltransferase (Baat).